The chain runs to 308 residues: Putative transcription elongation factor S-II (308 aa).

The 80-residue stretch at 5–84 (EETQSLCKQV…KDWKNVVDGK (80 aa)) folds into the TFIIS N-terminal domain. Residues 82–126 (DGKSKSQDDGGAPPAKKHRKESVEEAKPEKKKIEAPYKRPEPSSR) form a disordered region. Over residues 102-125 (ESVEEAKPEKKKIEAPYKRPEPSS) the composition is skewed to basic and acidic residues. Residues 148-263 (TRLKSAQLLL…EHQMSVQQGT (116 aa)) form the TFIIS central domain. A TFIIS-type zinc finger spans residues 266-306 (DMFKCGKCGKKNCTYTQLQTRSSDEPMTTFVFCLECGNRWK). Residues Cys270, Cys273, Cys298, and Cys301 each contribute to the Zn(2+) site.

The protein belongs to the TFS-II family.

Its subcellular location is the nucleus. In terms of biological role, necessary for efficient RNA polymerase II transcription elongation past template-encoded arresting sites. The arresting sites in DNA have the property of trapping a certain fraction of elongating RNA polymerases that pass through, resulting in locked ternary complexes. Cleavage of the nascent transcript by S-II allows the resumption of elongation from the new 3'-terminus. This chain is Putative transcription elongation factor S-II, found in Caenorhabditis elegans.